A 1023-amino-acid chain; its full sequence is MTLNNCASMKLEVHFQSKQNEDSEEEEQCTISSHWAFQQESKCWSPMGSSDLLAPPSPGLPATSSCESVLTELSATSLPVITVSLPPEPADLPLPGRAPSSSDRPLLSPTQGQEGPQDKAKKRHRNRSFLKHLESLRRKEKSGSQQAEPKHSPATSEKVSKASSFRSCRGFLSAGFYRAKNWAATSAGGSGANTRKAWEAWPVASFRHPQWTHRGDCLVHVPGDHKPGTFPRSLSIESLCPEDGHRLADWQPGRRWGCEGRRGSCGSTGSHASTYDNLPELYPAEPVMVGAEAEDEDDEESGGSYAHLDDILQHVWGLQQRVELWSRAMYPDLGPGDEEEEEATSSVEIATVEVKCQAEALSQMEVPAHGESPAWAQAEVQPAVLAPAQAPAEAEPVAQEEAEAPAPAPAPAPAQDSEQEAHSGGEPTFASSLSVEEGHSISDTVASSSELDSSGNSMNEAEAAGPLAGLQASMPRERRDSGVGASLTRPCRKLRWHSFQNSHRPSLNSESLEINRQFAGQINLLHKGSLLRLTAFMEKYTVPHKQGWVWSMPKFMRRNKTPDYRGQHVFGVPPLIHVQRTGQPLPQSIQQAMRYLRSQCLDQVGIFRKSGVKSRIQNLRQMNETSPDNVCYEGQSAYDVADLLKQYFRDLPEPIFTSKLTTTFLQIYQLLPKDQWLAAAQAATLLLPDENREVLQTLLYFLSDIASAEENQMTAGNLAVCLAPSIFHLNVSKKDSPSPRIKSKRSLIGRPGPRDLSDNMAATQGLSHMISDCKKLFQVPQDMVLQLCSSYSAAELSPPGPALAELRQAQAAGVSLSLYMEENIQDLLRDAAERFKGWMSVPGPQHTELACRKAPDGHPLRLWKASTEVAAPPAVVLHRVLRERALWDEDLLRAQVLEALMPGVELYHYVTDSMAPHPCRDFVVLRMWRSDLPRGGCLLVSQSLDPEQPVPESGVRALMLTSQYLMEPCGLGRSRLTHICRADLRGRSPDWYNKVFGHLCAMEVAKIRDSFPTLQAAGPETKL.

Disordered regions lie at residues 46–67 (PMGSSDLLAPPSPGLPATSSCE) and 82–161 (TVSL…KVSK). Polar residues predominate over residues 99–114 (PSSSDRPLLSPTQGQE). Phosphoserine is present on S108. Over residues 120-130 (AKKRHRNRSFL) the composition is skewed to basic residues. Positions 143 to 161 (GSQQAEPKHSPATSEKVSK) are enriched in polar residues. Position 169 is an asymmetric dimethylarginine (R169). Residues S235 and S238 each carry the phosphoserine modification. Residues 387–397 (PAQAPAEAEPV) are compositionally biased toward low complexity. Disordered regions lie at residues 387-461 (PAQA…MNEA) and 467-486 (LAGLQASMPRERRDSGVGAS). Positions 441–459 (ISDTVASSSELDSSGNSMN) are enriched in polar residues. S498 and S506 each carry phosphoserine. The region spanning 573 to 777 (PPLIHVQRTG…HMISDCKKLF (205 aa)) is the Rho-GAP domain. The interval 733-757 (KKDSPSPRIKSKRSLIGRPGPRDLS) is disordered. Residues 809 to 1017 (AQAAGVSLSL…RDSFPTLQAA (209 aa)) form the START domain.

As to quaternary structure, binds both the SH2 and PTB domains of TNS1. Widely expressed with highest levels in kidney, lung and placenta.

Its subcellular location is the cell junction. The protein resides in the focal adhesion. Its function is as follows. Accelerates GTPase activity of RHOA and CDC42, but not RAC1. Stimulates the hydrolysis of phosphatidylinositol 4,5-bisphosphate by PLCD1. In Homo sapiens (Human), this protein is StAR-related lipid transfer protein 8 (STARD8).